Reading from the N-terminus, the 451-residue chain is Glycylpeptide N-tetradecanoyltransferase (451 aa).

Tetradecanoyl-CoA contacts are provided by residues Y34–W37, L167–V169, and S175–T179. L451 serves as the catalytic Proton acceptor; via carboxylate.

The protein belongs to the NMT family. Monomer.

The protein localises to the cytoplasm. It catalyses the reaction N-terminal glycyl-[protein] + tetradecanoyl-CoA = N-tetradecanoylglycyl-[protein] + CoA + H(+). Functionally, adds a myristoyl group to the N-terminal glycine residue of certain cellular proteins. The chain is Glycylpeptide N-tetradecanoyltransferase (NMT1) from Candida glabrata (strain ATCC 2001 / BCRC 20586 / JCM 3761 / NBRC 0622 / NRRL Y-65 / CBS 138) (Yeast).